The primary structure comprises 540 residues: MQAVKRSRRHVEEEPTMVEPKTKYDRQLRIWGEVGQAALEEASICLLNCGPTGSEALKNLVLGGVGSITVVDGSKVQFGDLGNNFMVDAKSVGQSKAKSVCAFLQELNDSVNAKFIEENPDTLITTNPSFFSQFTLVIATQLVEDSMLKLDRICRDANVKLVLVRSYGLAGFVRISVKEHPIIDSKPDHFLDDLRLNNPWPELKSFVETIDLNVSEPAAAHKHIPYVVILVKMAEEWAQSHSGNLPSTREEKKEFKDLVKSKMVSTDEDNYKEAIEAAFKVFAPRGISSEVQKLINDSCAEVNSNSSAFWVMVAALKEFVLNEGGGEAPLEGSIPDMTSSTEHYINLQKIYLAKAEADFLVIEERVKNILKKIGRDPSSIPKPTIKSFCKNARKLKLCRYRMVEDEFRNPSVTEIQKYLADEDYSGAMGFYILLRAADRFAANYNKFPGQFDGGMDEDISRLKTTALSLLTDLGCNGSVLPDDLIHEMCRFGASEIHVVSAFVGGIASQEVIKLVTKQFVPMLGTYIFNGIDHKSQLLKL.

Belongs to the ubiquitin-activating E1 family. ULA1 subfamily. Heterodimer of ECR1 and AXR1. The complex binds to RUB1/NEDD8 and RCE1. As to expression, expressed in shoot, root and floral meristems, in vascular tissues of cotyledons and mature leaves, and in the stele of the root. Expressed at higher levels on the lower side of an emerging root during germination and at higher levels on the underside of the apical hook.

Its subcellular location is the nucleus. It functions in the pathway protein modification; protein neddylation. Functionally, regulatory subunit of the dimeric ECR1-AXR1 E1 enzyme. E1 activates RUB1/NEDD8 by first adenylating its C-terminal glycine residue with ATP, thereafter linking this residue to the side chain of the catalytic cysteine, yielding a RUB1-ECR1 thioester and free AMP. E1 finally transfers RUB1 to the catalytic cysteine of RCE1. Plays an important role in auxin response. Regulates the chromosomal localization of meiotic recombination by crossovers (COs) and subsequent synapsis, probably through the activation of a CRL4 complex. Required for E3-mediated protein degradation in response to auxin, jasmonic acid and cold stress. Required for the COP1-COP10-CSN-mediated repression of photomorphogenesis in the dark. May function redundantly with AXL1 in the RUB conjugating pathway. Seems not to be functionally equivalent to AXL1 in vivo. In Arabidopsis thaliana (Mouse-ear cress), this protein is NEDD8-activating enzyme E1 regulatory subunit AXR1.